The sequence spans 451 residues: Ammonium transporter Rh type B (451 aa).

At 1-11 (MADVSTSMRLK) the chain is on the cytoplasmic side. A helical membrane pass occupies residues 12–32 (LPVVCFILEIILIILFGALVQ). Over 33–63 (YDYETDAKEWHNQSHNDYENDFYFRYPSFQD) the chain is Extracellular. A glycan (N-linked (GlcNAc...) asparagine) is linked at Asn44. A helical membrane pass occupies residues 64–84 (VHVMIFIGFGFLMTFLQKYGF). At 85–87 (GSV) the chain is on the cytoplasmic side. A helical membrane pass occupies residues 88–108 (GFNFLIAAFSLQWATLMQGFF). The Extracellular segment spans residues 109–121 (HGMHGGKIHVGVE). Residues 122 to 142 (SMINADFCTGSVLISFGAVLG) traverse the membrane as a helical segment. Topologically, residues 143–151 (KTSPIQLLT) are cytoplasmic. The helical transmembrane segment at 152–172 (MAMFEVTLFAVNEFILLSLLG) threads the bilayer. The Extracellular segment spans residues 173-176 (TRDA). A helical membrane pass occupies residues 177–197 (GGSMTIHTFGAYFGLMVTRIL). Over 198 to 216 (YRPHLDKSKHRNSSVYHSD) the chain is Cytoplasmic. Residues 217–237 (LFAMIGTIYLWMFWPSFNSAI) form a helical membrane-spanning segment. The Extracellular segment spans residues 238–247 (TAHGDDQHRT). A helical transmembrane segment spans residues 248-270 (ALNTYYSLAACTLATYGMSAVTS). Topologically, residues 271 to 274 (HDGK) are cytoplasmic. A helical membrane pass occupies residues 275-295 (LDMVHIQNAALAGGVAVGTAG). The Extracellular portion of the chain corresponds to 296 to 298 (EMM). A helical membrane pass occupies residues 299-319 (LTPFGSMIVGFLAGIISVLGF). At 320–340 (KFLSPILESKLKIQDTCGVHN) the chain is on the cytoplasmic side. A helical membrane pass occupies residues 341-361 (LHGMPGVLGAIVGAVTAALAT). The Extracellular segment spans residues 362–390 (MDVYGKGMEDVFPAVADGSIDASKQGGVQ). A helical membrane pass occupies residues 391 to 411 (ALSLAITLGIALLGGLIVVFG). At 412-451 (TPPDTLCFEDGVYWEVPESEAPHEAQLTTVRTEETEKLSS) the chain is on the cytoplasmic side.

It belongs to the ammonium transporter (TC 2.A.49) family. Rh subfamily.

It localises to the basolateral cell membrane. The protein localises to the cytoplasmic vesicle membrane. Functionally, functions as an ammonia transporter. May play a role in the elimination of ammonia in the gill. The polypeptide is Ammonium transporter Rh type B (rhbg) (Tetraodon nigroviridis (Spotted green pufferfish)).